The primary structure comprises 89 residues: Putative regulatory protein MAE_11840 (89 aa).

Belongs to the RemA family.

This Microcystis aeruginosa (strain NIES-843 / IAM M-2473) protein is Putative regulatory protein MAE_11840.